We begin with the raw amino-acid sequence, 372 residues long: Homeobox protein Nkx-2.1 (372 aa).

A DNA-binding region (homeobox) is located at residues 161-220; the sequence is RRKRRVLFSQAQVYELERRFKQQKYLSAPEREHLASMIHLTPTQVKIWFQNHRYKMKRQA. 3 disordered regions span residues 219-258, 269-288, and 312-340; these read QAKD…SPRR, KPCQ…SHAQ, and AGLG…SPAG. Gly residues predominate over residues 233–244; sequence SGGGGGGGGGAG. Over residues 245–254 the composition is skewed to low complexity; it reads CPQQQQAQQQ. Serine 255 carries the post-translational modification Phosphoserine. Positions 273 to 288 are enriched in low complexity; that stretch reads AGAPAPGAASLQSHAQ.

Belongs to the NK-2 homeobox family. As to quaternary structure, interacts with WWTR1. In terms of processing, phosphorylated on serine residues by STK3/MST2. As to expression, thyroid, lung and brain.

It is found in the nucleus. Transcription factor that binds and activates the promoter of thyroid specific genes such as thyroglobulin, thyroperoxidase, and thyrotropin receptor. Crucial in the maintenance of the thyroid differentiation phenotype. May play a role in lung development and surfactant homeostasis. Forms a regulatory loop with GRHL2 that coordinates lung epithelial cell morphogenesis and differentiation. Activates the transcription of GNRHR and plays a role in enhancing the circadian oscillation of its gene expression. Represses the transcription of the circadian transcriptional repressor NR1D1. The protein is Homeobox protein Nkx-2.1 of Mus musculus (Mouse).